A 591-amino-acid polypeptide reads, in one-letter code: MKYILVTGGVISGIGKGVIASSVGTILKSSNLHVTSIKIDPYINIDAGTFSPYEHGEVFVLDDGGEVDLDLGNYERFLDIRLTKDNNLTTGKIYQSVINKERKGDYLGKTVQVVPHITEAIQEWVMRQALIPVDEDGIEPEVCVIELGGTVGDIESMPFVEAFRQFQFKARRENFCNIHVSLVPQPSATGEQKTKPTQNSVRELRGLGLSPDLVVCRCSTPLDTSVKEKISMFCHVEPQQVICVHDVSSIYRVPLLLEEQGVVDYFRQRLDLPIGRQPRRLLMKWKEMADRYERLLESCSIALVGKYTKFSDSYASVIKALEHSALAINHRLEIKYIDSADLEQETLQEEPVRYHEAWQKLCSSDGILVPGGFGVRGTEGKIQAIAWARKQKKPFLGVCLGMQLAVVEFARDVLDWKDANSTEFNPKTSHPVVIDMPEHNPGQMGGTMRLGKRRTIFHSQNSVMKKLYGGHEYVEERHRHRYEVNPELRRELEARGLKFVGQDTEGERMEIVELEDHPYFVGVQYHPEFLSRPIKPSPPYFGLLLASVGRLSQYIERGCRLSPRDTYSDRSENSSPDAEIAELKLPMIDHE.

Residues S300 to Y554 form the Glutamine amidotransferase type-1 domain. Residues C399, H526, and E528 each act as for GATase activity in the active site. Residues S562 to E572 are compositionally biased toward basic and acidic residues. The interval S562–A581 is disordered.

Belongs to the CTP synthase family.

It carries out the reaction UTP + L-glutamine + ATP + H2O = CTP + L-glutamate + ADP + phosphate + 2 H(+). It participates in pyrimidine metabolism; CTP biosynthesis via de novo pathway; CTP from UDP: step 2/2. Its function is as follows. This enzyme is involved in the de novo synthesis of CTP, a precursor of DNA, RNA and phospholipids. Catalyzes the ATP-dependent amination of UTP to CTP with either L-glutamine or ammonia as a source of nitrogen. In Xenopus laevis (African clawed frog), this protein is CTP synthase 1-B (ctps1-b).